The following is a 343-amino-acid chain: Zinc finger CCCH domain-containing protein 39 (343 aa).

Positions 114 to 147 (LSHLADAADEAAALRQENAELRVANNDLACRIAK) form a coiled coil. 2 C3H1-type zinc fingers span residues 268–296 (MFKT…HGVA) and 306–334 (RYKT…HSIT).

This is Zinc finger CCCH domain-containing protein 39 from Oryza sativa subsp. japonica (Rice).